We begin with the raw amino-acid sequence, 240 residues long: DNA repair protein RecO (240 aa).

This sequence belongs to the RecO family.

Functionally, involved in DNA repair and RecF pathway recombination. The chain is DNA repair protein RecO from Pseudoalteromonas atlantica (strain T6c / ATCC BAA-1087).